The following is a 54-amino-acid chain: MRFQQFLFAFFIFIMSLLLISGQRPVNLTMRRKLRKHNCLQRRCMPLHSRVPFP.

The N-terminal stretch at 1–22 is a signal peptide; sequence MRFQQFLFAFFIFIMSLLLISG. Asparagine 27 is a glycosylation site (N-linked (GlcNAc...) asparagine).

Belongs to the Elabela/Toddler family. In terms of assembly, interacts with APLNR. Expressed in the intima of blood vessels. Expressed in endothelial cells in blood vessels in the heart and lung. Expressed in cytotrophoblasts and syncytiotrophoblasts of first-trimester placental tissue and term placentas (at protein level). Not detected in smooth muscle cells or cardiomyocytes (at protein level). Expressed in kidney. Expressed in blood vessels. Expressed in embryonic (ESCs) and induced (iPSCs) pluripotent stem cells. Most highly expressed in undifferentiated embryonic stem cell and is rapidly down-regulated during differentiation.

It is found in the secreted. The protein resides in the extracellular space. In terms of biological role, peptide hormone that functions as endogenous ligand for the G-protein-coupled apelin receptor (APLNR/APJ), that plays a role in the regulation of normal cardiovascular function and fluid homeostasis. Functions as a balanced agonist activating both G(i) protein pathway and beta-arrestin pathway of APLNR. Downstream G proteins activation, apelin can inhibit cAMP production and activate key intracellular effectors such as ERKs. On the other hand, APLNR activation induces beta-arrestin recruitment to the membrane leading to desensitization and internalization of the receptor. Required for mesendodermal differentiation, blood vessels formation and heart morphogenesis during early development and for adult cardiovascular homeostasis. Acts as a motogen by promoting mesendodermal cell migration during gastrulation by binding and activating APLNR. Acts as an early embryonic regulator of cellular movement with a role in migration and development of cardiac progenitor cells. May act as a chemoattractant for the activation of angioblast migration toward the embryonic midline, i.e. the position of the future vessel formation, during vasculogenesis. Positively regulates sinus venosus (SV)-derived endothelial cells migration into the developing heart to promote coronary blood vessel sprouting. Plays a role in placental vascular development; promotes placental trophoblast invasion and spiral artery remodeling in the uterus. Involved in the regulation of maternal cardiovascular homeostasis to prevent gestational hypertension and for potent cardioprotective functions during heart failure. Mediates myocardial contractility in an ERK1/2-dependent manner. In Homo sapiens (Human), this protein is Apelin receptor early endogenous ligand.